A 150-amino-acid chain; its full sequence is Large ribosomal subunit protein bL9 (150 aa).

It belongs to the bacterial ribosomal protein bL9 family.

Binds to the 23S rRNA. In Polaromonas sp. (strain JS666 / ATCC BAA-500), this protein is Large ribosomal subunit protein bL9.